A 313-amino-acid chain; its full sequence is Porphobilinogen deaminase (313 aa).

Residue C242 is modified to S-(dipyrrolylmethanemethyl)cysteine.

Belongs to the HMBS family. Monomer. Dipyrromethane serves as cofactor.

The catalysed reaction is 4 porphobilinogen + H2O = hydroxymethylbilane + 4 NH4(+). It functions in the pathway porphyrin-containing compound metabolism; protoporphyrin-IX biosynthesis; coproporphyrinogen-III from 5-aminolevulinate: step 2/4. Functionally, tetrapolymerization of the monopyrrole PBG into the hydroxymethylbilane pre-uroporphyrinogen in several discrete steps. In Escherichia fergusonii (strain ATCC 35469 / DSM 13698 / CCUG 18766 / IAM 14443 / JCM 21226 / LMG 7866 / NBRC 102419 / NCTC 12128 / CDC 0568-73), this protein is Porphobilinogen deaminase.